Reading from the N-terminus, the 58-residue chain is Large ribosomal subunit protein uL24 (58 aa).

Belongs to the universal ribosomal protein uL24 family. As to quaternary structure, part of the 50S ribosomal subunit.

Functionally, one of two assembly initiator proteins, it binds directly to the 5'-end of the 23S rRNA, where it nucleates assembly of the 50S subunit. One of the proteins that surrounds the polypeptide exit tunnel on the outside of the subunit. This Spiroplasma citri protein is Large ribosomal subunit protein uL24 (rplX).